We begin with the raw amino-acid sequence, 123 residues long: Dihydroneopterin triphosphate 2'-epimerase (123 aa).

The protein belongs to the DHNA family. Homooctamer. Dimer of tetramers.

The enzyme catalyses 7,8-dihydroneopterin 3'-triphosphate = 7,8-dihydromonapterin 3'-triphosphate. Catalyzes the epimerization of carbon 2' of the side chain of 7,8-dihydroneopterin triphosphate (H2NTP) to form 7,8-dihydromonapterin triphosphate (H2MTP). Is required for tetrahydromonapterin biosynthesis. In Pseudomonas aeruginosa (strain ATCC 15692 / DSM 22644 / CIP 104116 / JCM 14847 / LMG 12228 / 1C / PRS 101 / PAO1), this protein is Dihydroneopterin triphosphate 2'-epimerase.